The following is a 307-amino-acid chain: Aspartate carbamoyltransferase catalytic subunit (307 aa).

Carbamoyl phosphate-binding residues include Arg55 and Thr56. Residue Lys85 coordinates L-aspartate. Residues Arg106, His135, and Gln138 each coordinate carbamoyl phosphate. Arg168 and Arg230 together coordinate L-aspartate. Leu268 and Pro269 together coordinate carbamoyl phosphate.

It belongs to the aspartate/ornithine carbamoyltransferase superfamily. ATCase family. In terms of assembly, heterododecamer (2C3:3R2) of six catalytic PyrB chains organized as two trimers (C3), and six regulatory PyrI chains organized as three dimers (R2).

The enzyme catalyses carbamoyl phosphate + L-aspartate = N-carbamoyl-L-aspartate + phosphate + H(+). It functions in the pathway pyrimidine metabolism; UMP biosynthesis via de novo pathway; (S)-dihydroorotate from bicarbonate: step 2/3. Catalyzes the condensation of carbamoyl phosphate and aspartate to form carbamoyl aspartate and inorganic phosphate, the committed step in the de novo pyrimidine nucleotide biosynthesis pathway. This is Aspartate carbamoyltransferase catalytic subunit from Photorhabdus laumondii subsp. laumondii (strain DSM 15139 / CIP 105565 / TT01) (Photorhabdus luminescens subsp. laumondii).